Reading from the N-terminus, the 466-residue chain is Ribulose bisphosphate carboxylase large chain (466 aa).

Residue Lys5 is modified to N6,N6,N6-trimethyllysine. Substrate-binding residues include Asn114 and Thr164. Lys166 acts as the Proton acceptor in catalysis. Residue Lys168 participates in substrate binding. Mg(2+) is bound by residues Lys192, Asp194, and Glu195. N6-carboxylysine is present on Lys192. His285 (proton acceptor) is an active-site residue. Substrate is bound by residues Arg286, His318, and Ser370.

This sequence belongs to the RuBisCO large chain family. Type I subfamily. In terms of assembly, heterohexadecamer of 8 large chains and 8 small chains; disulfide-linked. The disulfide link is formed within the large subunit homodimers. It depends on Mg(2+) as a cofactor. The disulfide bond which can form in the large chain dimeric partners within the hexadecamer appears to be associated with oxidative stress and protein turnover.

Its subcellular location is the plastid. The protein localises to the chloroplast. The enzyme catalyses 2 (2R)-3-phosphoglycerate + 2 H(+) = D-ribulose 1,5-bisphosphate + CO2 + H2O. It carries out the reaction D-ribulose 1,5-bisphosphate + O2 = 2-phosphoglycolate + (2R)-3-phosphoglycerate + 2 H(+). Functionally, ruBisCO catalyzes two reactions: the carboxylation of D-ribulose 1,5-bisphosphate, the primary event in carbon dioxide fixation, as well as the oxidative fragmentation of the pentose substrate in the photorespiration process. Both reactions occur simultaneously and in competition at the same active site. This is Ribulose bisphosphate carboxylase large chain from Moringa oleifera (Horseradish tree).